The following is a 490-amino-acid chain: GTPase Der (490 aa).

2 EngA-type G domains span residues 3–166 and 196–369; these read PVIA…PRDE and IKIA…KSAV. GTP contacts are provided by residues 9–16, 56–60, 118–121, 202–209, 249–253, and 314–317; these read GRPNVGKS, DTGGI, NKID, DTAGV, and NKWD. One can recognise a KH-like domain in the interval 370–454; that stretch reads TRWPTSRLTQ…PIRIEFKGGE (85 aa). Residues 452-490 are disordered; that stretch reads GGENPYEGNKNTLTDRQVNKKRRMMSHHKKADKKRRDKR. The segment covering 470–490 has biased composition (basic residues); it reads NKKRRMMSHHKKADKKRRDKR.

This sequence belongs to the TRAFAC class TrmE-Era-EngA-EngB-Septin-like GTPase superfamily. EngA (Der) GTPase family. As to quaternary structure, associates with the 50S ribosomal subunit.

Functionally, GTPase that plays an essential role in the late steps of ribosome biogenesis. The sequence is that of GTPase Der from Pseudomonas syringae pv. syringae (strain B728a).